We begin with the raw amino-acid sequence, 324 residues long: Lipoyl synthase (324 aa).

[4Fe-4S] cluster is bound by residues Cys65, Cys70, Cys76, Cys91, Cys95, Cys98, and Ser302. The Radical SAM core domain maps to 77–291 (WEDREATFLI…AQYAEGLGFA (215 aa)).

Belongs to the radical SAM superfamily. Lipoyl synthase family. [4Fe-4S] cluster is required as a cofactor.

The protein localises to the cytoplasm. The enzyme catalyses [[Fe-S] cluster scaffold protein carrying a second [4Fe-4S](2+) cluster] + N(6)-octanoyl-L-lysyl-[protein] + 2 oxidized [2Fe-2S]-[ferredoxin] + 2 S-adenosyl-L-methionine + 4 H(+) = [[Fe-S] cluster scaffold protein] + N(6)-[(R)-dihydrolipoyl]-L-lysyl-[protein] + 4 Fe(3+) + 2 hydrogen sulfide + 2 5'-deoxyadenosine + 2 L-methionine + 2 reduced [2Fe-2S]-[ferredoxin]. It functions in the pathway protein modification; protein lipoylation via endogenous pathway; protein N(6)-(lipoyl)lysine from octanoyl-[acyl-carrier-protein]: step 2/2. In terms of biological role, catalyzes the radical-mediated insertion of two sulfur atoms into the C-6 and C-8 positions of the octanoyl moiety bound to the lipoyl domains of lipoate-dependent enzymes, thereby converting the octanoylated domains into lipoylated derivatives. This chain is Lipoyl synthase, found in Mycobacterium ulcerans (strain Agy99).